A 159-amino-acid polypeptide reads, in one-letter code: Probable cyclic pyranopterin monophosphate synthase accessory protein (159 aa).

Residue D128 is part of the active site.

The protein belongs to the MoaC family.

It functions in the pathway cofactor biosynthesis; molybdopterin biosynthesis. Together with MoaA, is involved in the conversion of 5'-GTP to cyclic pyranopterin monophosphate (cPMP or molybdopterin precursor Z). This chain is Probable cyclic pyranopterin monophosphate synthase accessory protein, found in Methanothermobacter thermautotrophicus (strain ATCC 29096 / DSM 1053 / JCM 10044 / NBRC 100330 / Delta H) (Methanobacterium thermoautotrophicum).